We begin with the raw amino-acid sequence, 306 residues long: Large ribosomal subunit protein uL18 (306 aa).

Belongs to the universal ribosomal protein uL18 family. In terms of assembly, component of the large ribosomal subunit (LSU).

It localises to the cytoplasm. The protein resides in the nucleus. In terms of biological role, component of the ribosome, a large ribonucleoprotein complex responsible for the synthesis of proteins in the cell. The small ribosomal subunit (SSU) binds messenger RNAs (mRNAs) and translates the encoded message by selecting cognate aminoacyl-transfer RNA (tRNA) molecules. The large subunit (LSU) contains the ribosomal catalytic site termed the peptidyl transferase center (PTC), which catalyzes the formation of peptide bonds, thereby polymerizing the amino acids delivered by tRNAs into a polypeptide chain. The nascent polypeptides leave the ribosome through a tunnel in the LSU and interact with protein factors that function in enzymatic processing, targeting, and the membrane insertion of nascent chains at the exit of the ribosomal tunnel. This is Large ribosomal subunit protein uL18 (RPL5) from Theileria annulata.